We begin with the raw amino-acid sequence, 151 residues long: Probable transport accessory protein MmpS1 (151 aa).

Helical transmembrane passes span 8-28 (FWIP…VSRL) and 81-101 (VVNA…AVVA).

It belongs to the MmpS family.

The protein resides in the cell membrane. In Mycobacterium tuberculosis (strain CDC 1551 / Oshkosh), this protein is Probable transport accessory protein MmpS1 (mmpS1).